The chain runs to 93 residues: uncharacterized protein (93 aa).

Transmembrane regions (helical) follow at residues 8–28 and 54–74; these read FIGI…LLAS and ACFL…YLIL.

It is found in the cell membrane. This is an uncharacterized protein from Methanocaldococcus jannaschii (strain ATCC 43067 / DSM 2661 / JAL-1 / JCM 10045 / NBRC 100440) (Methanococcus jannaschii).